The chain runs to 168 residues: Cell division inhibitor SulA (168 aa).

Positions 105-111 (ALETGNY) are ftsZ binding. Residues 161–168 (RIHSGMVH) form a lon protease binding region.

The protein belongs to the SulA family. In terms of assembly, interacts with FtsZ. In terms of processing, is rapidly cleaved and degraded by the Lon protease once DNA damage is repaired.

Its function is as follows. Component of the SOS system and an inhibitor of cell division. Accumulation of SulA causes rapid cessation of cell division and the appearance of long, non-septate filaments. In the presence of GTP, binds a polymerization-competent form of FtsZ in a 1:1 ratio, thus inhibiting FtsZ polymerization and therefore preventing it from participating in the assembly of the Z ring. This mechanism prevents the premature segregation of damaged DNA to daughter cells during cell division. The protein is Cell division inhibitor SulA of Cronobacter sakazakii (strain ATCC BAA-894) (Enterobacter sakazakii).